Here is a 650-residue protein sequence, read N- to C-terminus: DNA topoisomerase 3 (650 aa).

A Toprim domain is found at 1–134; that stretch reads MRLFIAEKPS…KLNQIQRCLI (134 aa). Mg(2+)-binding residues include Glu7, Asp103, and Asp105. A Topo IA-type catalytic domain is found at 155 to 617; sequence FIPLATSALA…TLTNFLPELM (463 aa). Residues 194–199 are interaction with DNA; the sequence is SVGRVQ. The active-site O-(5'-phospho-DNA)-tyrosine intermediate is Tyr342.

The protein belongs to the type IA topoisomerase family. Mg(2+) is required as a cofactor.

The catalysed reaction is ATP-independent breakage of single-stranded DNA, followed by passage and rejoining.. In terms of biological role, releases the supercoiling and torsional tension of DNA, which is introduced during the DNA replication and transcription, by transiently cleaving and rejoining one strand of the DNA duplex. Introduces a single-strand break via transesterification at a target site in duplex DNA. The scissile phosphodiester is attacked by the catalytic tyrosine of the enzyme, resulting in the formation of a DNA-(5'-phosphotyrosyl)-enzyme intermediate and the expulsion of a 3'-OH DNA strand. The free DNA strand then undergoes passage around the unbroken strand, thus removing DNA supercoils. Finally, in the religation step, the DNA 3'-OH attacks the covalent intermediate to expel the active-site tyrosine and restore the DNA phosphodiester backbone. This Pasteurella multocida (strain Pm70) protein is DNA topoisomerase 3.